The following is a 188-amino-acid chain: Nicotinamide/nicotinic acid mononucleotide adenylyltransferase (188 aa).

The protein belongs to the archaeal NMN adenylyltransferase family.

The catalysed reaction is beta-nicotinamide D-ribonucleotide + ATP + H(+) = diphosphate + NAD(+). It carries out the reaction nicotinate beta-D-ribonucleotide + ATP + H(+) = deamido-NAD(+) + diphosphate. The protein operates within cofactor biosynthesis; NAD(+) biosynthesis; NAD(+) from nicotinamide D-ribonucleotide: step 1/1. Its pathway is cofactor biosynthesis; NAD(+) biosynthesis; deamido-NAD(+) from nicotinate D-ribonucleotide: step 1/1. In terms of biological role, dual substrate specificity enzyme that catalyzes the formation of NAD(+) from nicotinamide mononucleotide (NMN) and the formation of deamido-NAD(+) (NaAD) from nicotinate mononucleotide (NaMN). Shows nearly identical catalytic efficiency for both physiological substrates. Plays an essential role in all three routes of NAD biogenesis, de novo synthesis as well as the deamidating and nondeamidating salvage pathways. This Acinetobacter baylyi (strain ATCC 33305 / BD413 / ADP1) protein is Nicotinamide/nicotinic acid mononucleotide adenylyltransferase.